The primary structure comprises 616 residues: Proline--tRNA ligase (616 aa).

This sequence belongs to the class-II aminoacyl-tRNA synthetase family. ProS type 1 subfamily. As to quaternary structure, homodimer.

It localises to the cytoplasm. It catalyses the reaction tRNA(Pro) + L-proline + ATP = L-prolyl-tRNA(Pro) + AMP + diphosphate. Functionally, catalyzes the attachment of proline to tRNA(Pro) in a two-step reaction: proline is first activated by ATP to form Pro-AMP and then transferred to the acceptor end of tRNA(Pro). As ProRS can inadvertently accommodate and process non-cognate amino acids such as alanine and cysteine, to avoid such errors it has two additional distinct editing activities against alanine. One activity is designated as 'pretransfer' editing and involves the tRNA(Pro)-independent hydrolysis of activated Ala-AMP. The other activity is designated 'posttransfer' editing and involves deacylation of mischarged Ala-tRNA(Pro). The misacylated Cys-tRNA(Pro) is not edited by ProRS. The protein is Proline--tRNA ligase of Streptococcus sanguinis (strain SK36).